Reading from the N-terminus, the 521-residue chain is Acetylcholine receptor subunit beta-like 1 (521 aa).

An N-terminal signal peptide occupies residues 1-24 (MESSCKSWLLCSILVLVAFSLVSA). Over 25 to 235 (SEDEERLVRD…ITFYIIIRRK (211 aa)) the chain is Extracellular. Asparagine 48 carries an N-linked (GlcNAc...) asparagine glycan. Cysteine 152 and cysteine 166 are joined by a disulfide. A run of 3 helical transmembrane segments spans residues 236-260 (TLFY…VFYL), 268-286 (VTLG…LLVS), and 302-323 (YLLF…IINW). At 324-481 (NFRGPRTHRM…WKYVAMVIDR (158 aa)) the chain is on the cytoplasmic side. A helical membrane pass occupies residues 482–500 (LQLYIFFIVTTAGTVGILM).

Belongs to the ligand-gated ion channel (TC 1.A.9) family. Acetylcholine receptor (TC 1.A.9.1) subfamily. CNS in embryos.

The protein resides in the postsynaptic cell membrane. Its subcellular location is the cell membrane. After binding acetylcholine, the AChR responds by an extensive change in conformation that affects all subunits and leads to opening of an ion-conducting channel across the plasma membrane. This is Acetylcholine receptor subunit beta-like 1 (nAChRbeta1) from Drosophila melanogaster (Fruit fly).